The sequence spans 165 residues: V-type proton ATPase 16 kDa proteolipid subunit (165 aa).

Residues 1–10 are Lumenal-facing; the sequence is MPSTFSGDET. Residues 11–33 traverse the membrane as a helical segment; it reads APFFGFLGAAAALVFSCMGAAYG. Residues 34–55 are Cytoplasmic-facing; sequence TAKSGVGVASMGVMRPELVMKS. Residues 56 to 76 form a helical membrane-spanning segment; it reads IVPVVMAGVLGIYGLIIAVII. The Lumenal segment spans residues 77 to 95; that stretch reads STGINPKTKSYYLFDGYAH. Residues 96–117 traverse the membrane as a helical segment; that stretch reads LSSGLACGLAGLSAGMAIGIVG. Topologically, residues 118 to 129 are cytoplasmic; sequence DAGVRANAQQPK. The helical transmembrane segment at 130 to 155 threads the bilayer; the sequence is LFVGMILILIFAEALALYGLIVGIIL. Residues 156 to 165 lie on the Lumenal side of the membrane; the sequence is SSRAGQSRAE.

Belongs to the V-ATPase proteolipid subunit family. As to quaternary structure, V-ATPase is a heteromultimeric enzyme composed of a peripheral catalytic V1 complex (main components: subunits A, B, C, D, E, and F) attached to an integral membrane V0 proton pore complex (main component: the proteolipid protein; which is present as a hexamer that forms the proton-conducting pore).

It localises to the vacuole membrane. In terms of biological role, proton-conducting pore forming subunit of the membrane integral V0 complex of vacuolar ATPase. V-ATPase is responsible for acidifying a variety of intracellular compartments in eukaryotic cells. The polypeptide is V-type proton ATPase 16 kDa proteolipid subunit (Nicotiana tabacum (Common tobacco)).